We begin with the raw amino-acid sequence, 500 residues long: NAD(P)H-quinone oxidoreductase chain 4, chloroplastic (500 aa).

14 consecutive transmembrane segments (helical) span residues 4-24 (FPWL…IFFL), 31-51 (VIFW…TYAF), 84-104 (GLSI…TLAA), 111-131 (ARLF…LFSC), 134-154 (LLLF…LLSM), 167-187 (FILY…GIGL), 212-232 (IFYI…PLHT), 242-262 (HYST…YGLV), 272-292 (AHSL…IYAA), 308-328 (SSVS…DIGL), 330-350 (GALL…FLAG), 386-406 (LALP…GLIT), 411-431 (LLMA…LTPI), and 462-482 (LFLS…PDFV).

It belongs to the complex I subunit 4 family.

It is found in the plastid. The protein localises to the chloroplast thylakoid membrane. It catalyses the reaction a plastoquinone + NADH + (n+1) H(+)(in) = a plastoquinol + NAD(+) + n H(+)(out). The catalysed reaction is a plastoquinone + NADPH + (n+1) H(+)(in) = a plastoquinol + NADP(+) + n H(+)(out). This is NAD(P)H-quinone oxidoreductase chain 4, chloroplastic from Jasminum nudiflorum (Winter jasmine).